We begin with the raw amino-acid sequence, 313 residues long: tRNA dimethylallyltransferase (313 aa).

Glycine 10–threonine 17 lines the ATP pocket. Threonine 12–threonine 17 serves as a coordination point for substrate. Interaction with substrate tRNA stretches follow at residues aspartate 35–methionine 38, glutamine 159–arginine 163, and arginine 240–arginine 245.

This sequence belongs to the IPP transferase family. As to quaternary structure, monomer. It depends on Mg(2+) as a cofactor.

It catalyses the reaction adenosine(37) in tRNA + dimethylallyl diphosphate = N(6)-dimethylallyladenosine(37) in tRNA + diphosphate. Its function is as follows. Catalyzes the transfer of a dimethylallyl group onto the adenine at position 37 in tRNAs that read codons beginning with uridine, leading to the formation of N6-(dimethylallyl)adenosine (i(6)A). The sequence is that of tRNA dimethylallyltransferase from Legionella pneumophila (strain Paris).